The sequence spans 43 residues: METATILGISIAAALVGITVLALYTAFGPPAAELSDPFEDHED.

The chain crosses the membrane as a helical span at residues Ala4–Tyr24.

Belongs to the PsbN family.

The protein resides in the cellular thylakoid membrane. Its function is as follows. May play a role in photosystem I and II biogenesis. In Microcystis aeruginosa (strain NIES-843 / IAM M-2473), this protein is Protein PsbN 2.